A 304-amino-acid polypeptide reads, in one-letter code: Uricase (304 aa).

An N-acetylalanine modification is found at Ala2. An N6-acetyllysine; alternate mark is found at Lys10 and Lys23. 2 positions are modified to N6-succinyllysine; alternate: Lys10 and Lys23. Lys23 functions as the Charge relay system in the catalytic mechanism. N6-acetyllysine occurs at positions 27 and 36. Phosphoserine occurs at positions 39 and 63. The active-site Charge relay system is the Thr68. Urate contacts are provided by Thr68 and Asp69. N6-acetyllysine is present on residues Lys118, Lys122, and Lys164. Phe170 contacts urate. N6-acetyllysine occurs at positions 175 and 185. Residue Arg187 coordinates urate. An N6-acetyllysine; alternate mark is found at Lys221 and Lys228. 2 positions are modified to N6-succinyllysine; alternate: Lys221 and Lys228. Ser232 carries the phosphoserine modification. Urate-binding residues include Val235, Gln236, and Asn262. His264 acts as the Charge relay system in catalysis. N6-acetyllysine is present on Lys278. Tyr289 carries the phosphotyrosine modification. The Microbody targeting signal motif lies at 302 to 304; the sequence is SRL.

This sequence belongs to the uricase family.

It localises to the peroxisome. The enzyme catalyses urate + O2 + H2O = 5-hydroxyisourate + H2O2. It participates in purine metabolism; urate degradation; (S)-allantoin from urate: step 1/3. Its function is as follows. Catalyzes the oxidation of uric acid to 5-hydroxyisourate, which is further processed to form (S)-allantoin. The chain is Uricase (UOX) from Macaca fascicularis (Crab-eating macaque).